A 94-amino-acid polypeptide reads, in one-letter code: Small ribosomal subunit protein bS6 (94 aa).

Belongs to the bacterial ribosomal protein bS6 family.

Binds together with bS18 to 16S ribosomal RNA. The sequence is that of Small ribosomal subunit protein bS6 from Clostridium botulinum (strain Kyoto / Type A2).